The primary structure comprises 549 residues: MTARPNPVTATVRSDIPMSDTVVSTTYSEQAAHLVARIDQDGLGSVRPSLYETARVISAAPWLPGEPRRLAYLLDEQAPDGSWGEGPERYRLLPTLSGVEAALAVLRRGATPTETARRLAGAVDRGLAALRALPRSGPWPDTAAAEILVPGLVAKIHEQIARIAEDGTPALDGWRPGPGPALPGGYDEALPAYVAKRYASVGSLPVKFHHTFEGIAGYLPPALIPDVPDLLGSSPAATAARAATASSAPSAGTVAALESVAERYAGSFPEAAPILVFERLWVAAALAHTHLPAAALPTVRRWAADIYDPRGVRGAPGLMKDADDTAMAVLVSSLVGLEHTLEPLDQFHNGSHYDCYIGEDTGSITANAHALQALGGYQRRNPETQHIYGPRTDKLRDWLIDQQRPEGPWPDKWHASPYYATARSVAALTRFGGGHAVTAVETAVTWALDTQRDDGSWGVWGGTAEETAYAVQILLSTSTHRPQHTRALHRAETYLGDSAGSGRHPALWHDKTLYAPDAMIEAEILAARQTLRTRHDLNRRVTTPIHAEK.

Positions D321 to A326 match the DXDDTA motif motif. Positions Q451–W457 match the QXXDGSW motif motif.

It belongs to the terpene synthase family. The cofactor is Mg(2+).

It catalyses the reaction (2E,6E,10E)-geranylgeranyl diphosphate = (+)-copalyl diphosphate. Functionally, involved in the biosynthesis of the labdane-type bicyclic diterpene labda-8(17),12(E),14-triene. Catalyzes the conversion of geranylgeranyl diphosphate (GGDP) into (+)-copalyl diphosphate. The polypeptide is Copalyl diphosphate synthase (Streptomyces anulatus (Streptomyces chrysomallus)).